The chain runs to 393 residues: Formate-dependent phosphoribosylglycinamide formyltransferase (393 aa).

Residues 22 to 23 (EL) and Glu82 contribute to the N(1)-(5-phospho-beta-D-ribosyl)glycinamide site. ATP is bound by residues Arg114, Lys155, 160–165 (SSGKGQ), 195–198 (EGFI), and Glu203. The region spanning 119–308 (RLAAEELDLP…QFALHARAIL (190 aa)) is the ATP-grasp domain. 2 residues coordinate Mg(2+): Glu267 and Glu279. Residues Asp286, Lys356, and 363–364 (RR) each bind N(1)-(5-phospho-beta-D-ribosyl)glycinamide.

It belongs to the PurK/PurT family. In terms of assembly, homodimer.

It catalyses the reaction N(1)-(5-phospho-beta-D-ribosyl)glycinamide + formate + ATP = N(2)-formyl-N(1)-(5-phospho-beta-D-ribosyl)glycinamide + ADP + phosphate + H(+). It participates in purine metabolism; IMP biosynthesis via de novo pathway; N(2)-formyl-N(1)-(5-phospho-D-ribosyl)glycinamide from N(1)-(5-phospho-D-ribosyl)glycinamide (formate route): step 1/1. Involved in the de novo purine biosynthesis. Catalyzes the transfer of formate to 5-phospho-ribosyl-glycinamide (GAR), producing 5-phospho-ribosyl-N-formylglycinamide (FGAR). Formate is provided by PurU via hydrolysis of 10-formyl-tetrahydrofolate. The sequence is that of Formate-dependent phosphoribosylglycinamide formyltransferase from Pseudomonas fluorescens (strain ATCC BAA-477 / NRRL B-23932 / Pf-5).